The following is a 605-amino-acid chain: Elongation factor 4 (605 aa).

The tr-type G domain maps to 9–192 (GMIRNFCIIA…AIVQRIPAPA (184 aa)). GTP is bound by residues 21 to 26 (DHGKST) and 139 to 142 (NKID).

It belongs to the TRAFAC class translation factor GTPase superfamily. Classic translation factor GTPase family. LepA subfamily.

The protein localises to the cell inner membrane. The enzyme catalyses GTP + H2O = GDP + phosphate + H(+). In terms of biological role, required for accurate and efficient protein synthesis under certain stress conditions. May act as a fidelity factor of the translation reaction, by catalyzing a one-codon backward translocation of tRNAs on improperly translocated ribosomes. Back-translocation proceeds from a post-translocation (POST) complex to a pre-translocation (PRE) complex, thus giving elongation factor G a second chance to translocate the tRNAs correctly. Binds to ribosomes in a GTP-dependent manner. The protein is Elongation factor 4 of Chlorobaculum parvum (strain DSM 263 / NCIMB 8327) (Chlorobium vibrioforme subsp. thiosulfatophilum).